The following is a 192-amino-acid chain: MVRAGAVGTHLPASGLDIFGDLRKMNKRQLYYQVLNFAMIVSSALMIWKGLIVLTGSESPIVVVLSGSMEPAFHRGDLLFLTNFREDPIRAGEIVVFKVEGRDIPIVHRVIKVHEKDNGDIKFLTKGDNNEVDDRGLYKEGQNWLEKKDVVGRARGFLPYVGMVTIIMNDYPKFKYALLAVMGAYVLLKRES.

Topologically, residues 2–28 (VRAGAVGTHLPASGLDIFGDLRKMNKR) are cytoplasmic. Residues 29–48 (QLYYQVLNFAMIVSSALMIW) form a helical; Signal-anchor for type II membrane protein membrane-spanning segment. The Lumenal portion of the chain corresponds to 49-192 (KGLIVLTGSE…GAYVLLKRES (144 aa)). Catalysis depends on charge relay system residues S68, H108, and D134. The tract at residues 177–188 (ALLAVMGAYVLL) is C-terminal short (CTS) helix.

Belongs to the peptidase S26B family. Component of the signal peptidase complex paralog C (SPC-C) composed of a catalytic subunit SEC11C and three accessory subunits SPCS1, SPCS2 and SPCS3. Within the complex, interacts with SPCS2 and SPCS3. The complex induces a local thinning of the ER membrane which is used to measure the length of the signal peptide (SP) h-region of protein substrates. This ensures the selectivity of the complex towards h-regions shorter than 18-20 amino acids. In terms of processing, may undergo processing at the N-terminus.

It is found in the endoplasmic reticulum membrane. The enzyme catalyses Cleavage of hydrophobic, N-terminal signal or leader sequences from secreted and periplasmic proteins.. In terms of biological role, catalytic component of the signal peptidase complex (SPC) which catalyzes the cleavage of N-terminal signal sequences from nascent proteins as they are translocated into the lumen of the endoplasmic reticulum. Specifically cleaves N-terminal signal peptides that contain a hydrophobic alpha-helix (h-region) shorter than 18-20 amino acids. The chain is Signal peptidase complex catalytic subunit SEC11C (SEC11C) from Canis lupus familiaris (Dog).